Here is a 147-residue protein sequence, read N- to C-terminus: Probable WRKY transcription factor 45 (147 aa).

The interval 21-52 (TEFHGVDNSAQPTTSSEEKPRSKKKKKEREAR) is disordered. Residues 59-124 (SQVDILDDGY…YQGVHTHAVD (66 aa)) constitute a DNA-binding region (WRKY). Zn(2+)-binding residues include C90, C95, H119, and H121.

It belongs to the WRKY group I family.

The protein localises to the nucleus. Its function is as follows. Transcription factor. Interacts specifically with the W box (5'-(T)TGAC[CT]-3'), a frequently occurring elicitor-responsive cis-acting element. This is Probable WRKY transcription factor 45 (WRKY45) from Arabidopsis thaliana (Mouse-ear cress).